A 268-amino-acid polypeptide reads, in one-letter code: MEISQNQKNILLTISYDGTNFCGWQKQTKEGAETFRTVQGELEKALTKIHKHPIETNGSGRTDSGVHAARQAVNFFCDIKSMRASNFLPALNSILPKDIRVMDAAEVSPLLHARFNALSRTYRYKIKCGKTIFAHEQPYTWHIRRYPDIAALNEMASCLSGELDCTAFSAAGDQSISKSRYIKKAVFFIENDYLIFEICANAFLWKMVRSIVGTLLHLDEIGASKKDFKDILESKMREKAGPTAPPQGLFLWSIEYPEDLLKAPPETF.

The active-site Nucleophile is Asp63. Tyr122 contributes to the substrate binding site.

This sequence belongs to the tRNA pseudouridine synthase TruA family. In terms of assembly, homodimer.

It carries out the reaction uridine(38/39/40) in tRNA = pseudouridine(38/39/40) in tRNA. Its function is as follows. Formation of pseudouridine at positions 38, 39 and 40 in the anticodon stem and loop of transfer RNAs. The sequence is that of tRNA pseudouridine synthase A from Treponema denticola (strain ATCC 35405 / DSM 14222 / CIP 103919 / JCM 8153 / KCTC 15104).